The primary structure comprises 472 residues: Exodeoxyribonuclease 7 large subunit (472 aa).

This sequence belongs to the XseA family. As to quaternary structure, heterooligomer composed of large and small subunits.

The protein resides in the cytoplasm. It carries out the reaction Exonucleolytic cleavage in either 5'- to 3'- or 3'- to 5'-direction to yield nucleoside 5'-phosphates.. Functionally, bidirectionally degrades single-stranded DNA into large acid-insoluble oligonucleotides, which are then degraded further into small acid-soluble oligonucleotides. The protein is Exodeoxyribonuclease 7 large subunit of Carboxydothermus hydrogenoformans (strain ATCC BAA-161 / DSM 6008 / Z-2901).